Consider the following 150-residue polypeptide: Actin-related protein 2/3 complex subunit 5-C (150 aa).

A disordered region spans residues 21-45 (NKFVDEEEAGEGQQGPDEGEVDSAI).

It belongs to the ARPC5 family. In terms of assembly, component of the Arp2/3 complex composed of actr2/arp2, actr3/arp3, arpc1 (arpc1a or arpc1b), arpc2, arpc3, arpc4 and arpc5.

The protein localises to the cytoplasm. It localises to the cytoskeleton. Its subcellular location is the cell projection. The protein resides in the nucleus. Component of the Arp2/3 complex, a multiprotein complex that mediates actin polymerization upon stimulation by nucleation-promoting factor (NPF). The Arp2/3 complex mediates the formation of branched actin networks in the cytoplasm, providing the force for cell motility. In addition to its role in the cytoplasmic cytoskeleton, the Arp2/3 complex also promotes actin polymerization in the nucleus, thereby regulating gene transcription and repair of damaged DNA. The Arp2/3 complex promotes homologous recombination (HR) repair in response to DNA damage by promoting nuclear actin polymerization, leading to drive motility of double-strand breaks (DSBs). The protein is Actin-related protein 2/3 complex subunit 5-C (arpc5-c) of Xenopus laevis (African clawed frog).